The primary structure comprises 429 residues: Prenyltransferase okaC (429 aa).

Dimethylallyl diphosphate-binding residues include R101, K189, Y191, K257, Y259, Y342, Y406, and Y410.

The protein belongs to the tryptophan dimethylallyltransferase family.

It carries out the reaction cyclo(L-Trp-L-Trp) + 2 dimethylallyl diphosphate = cyclo(N(8)-(alpha,alpha-dimethylallyl)-L-Trp-6a-(alpha,alpha-dimethylallyl)-L-Trp) + 2 diphosphate. Its pathway is alkaloid biosynthesis. Functionally, prenyltransferase; part of the gene cluster that mediates the biosynthesis of okaramine B, a prenylated indole alkaloid that possesses an unusual octacyclic ring system, including a four-membered azetidine ring and an eight-membered azocine ring, and that exhibits insecticidal activity against silkworm larvae. Within the pathway, okaC performs asymmetric reverse prenylation of cyclo(L-Trp-L-Trp) at N-1 and C-2' of the indole ring to produce the cyclic prenylated tryptophan dimer cyclo(N8-(alpha,alpha-dimethylallyl)-L-Trp-6a-(alpha,alpha-dime-thylallyl)-L-Trp). The biosynthesis begins with the NRPS okaA that condenses two tryptophan molecules into cyclo(L-Trp-L-Trp). Prenylation by the prenyltransferase okaC then leads to the formation of cyclo(N8-(alpha,alpha-dimethylallyl)-L-Trp-6a-(alpha,alpha-dime-thylallyl)-L-Trp). This is followed by indole 2,3-epoxidation by the FAD-dependent monooxygenase okaB to facilitate the formation of the hexahydropyrrolo[2,3-b]indole (HPI) moiety of okaramine C. The cytochrome P450 monooxygenase okaD then likely catalyzes formation of the eight-membered ring of okaramine A. The dioxygenase okaE further forms the unusual 2-dimethyl-3-methyl-azetidine ring to yield 12-deshydroxyl okaramine E, as well as the hydroxylation of 12-deshydroxyl okaramine E to produce okaramine E. The cytochrome P450 monoxygenase okaG converts 12-deshydroxyl okaramine E into 3-desmethyl okaramine B which is further methylated by the methyltransferase okaF into okaramine B. In a shunt pathway, okaG and okaF together are also able to convert okaramine E into okaramine D. Okaramine H is produced by nonenzymatic conversion from okaramine A. This is Prenyltransferase okaC from Penicillium ochrochloron.